The chain runs to 864 residues: Dynamin-1 (864 aa).

The Dynamin-type G domain maps to 28-294 (DLDLPQIAVV…LTNHIRDTLP (267 aa)). Residues 38–45 (GGQSAGKS) are G1 motif. Residues S41, G43, K44, S45, S46, R59, and G60 each contribute to the GDP site. The tract at residues 64–66 (VTR) is G2 motif. Y80 carries the phosphotyrosine modification. Residue Y125 is modified to 3'-nitrotyrosine; alternate. Residue Y125 is modified to Phosphotyrosine; alternate. Residues 136-139 (DLPG) form a G3 motif region. A G4 motif region spans residues 205–208 (TKLD). GDP-binding residues include K206, D208, D211, N236, R237, and Q239. Positions 235-238 (VNRS) are G5 motif. Phosphoserine occurs at positions 306 and 347. Y354 carries the post-translational modification Phosphotyrosine. Residue S512 is modified to Phosphoserine. Residues 519–625 (LVIRKGWLTI…WKASFLRAGV (107 aa)) form the PH domain. A GED domain is found at 659-750 (VETIRNLVDS…IIGDINTTTV (92 aa)). Residues 767 to 864 (SVPAGRRSPT…PESPRPPFDL (98 aa)) are disordered. A Phosphoserine; by CDK5 modification is found at S774. S778 is modified (phosphoserine). Residue R796 is modified to Omega-N-methylarginine. S822 is subject to Phosphoserine. The segment covering 825–843 (PFGPPPQVPSRPNRAPPGV) has biased composition (pro residues). A phosphoserine mark is found at S851 and S857.

It belongs to the TRAFAC class dynamin-like GTPase superfamily. Dynamin/Fzo/YdjA family. Homodimer; homodimerization is mediated by the dynamin-type G domain which promotes assembly-stimulated GTPase activity. Homo-tetramer formed from two dimers in the absence of lipid. Oligomerizes into a helical polymer that self-assembles around the vesicle membrane, when associated to the menbrane through lipid binding. Interacts (via C-terminal proline-rich domain (PRD)) with SNX9 (via SH3 domain); this interaction allows regulation of DNM1 self-assembly during late stages of endocytic vesicle formation and supports DNM1's early functions in accelerating clathrin-coated pits (CCPs) maturation in non neuronals cell. Interacts (via C-terminal proline-rich domain (PRD)) with MYO1E (via SH3 domain); this interaction regulates receptor-mediated endocytosis. Interacts with SNX33 (via SH3 domain); this interaction decreases DNM1-dependent endocytosis. Interacts with DIAPH1. Interacts with GRB2 (via SH3 domain); this interaction mediates disassembly of DNM1 polymers, therefore modulates self-assembly. Forms a complex with BIN1 (via SH3 domain) and SH3GL2 (via SH3 domain). Forms a complex with SH3GL2 (via SH3 domain) and AMPH (via SH3 domain). Forms a complex with SH3GL2 (via SH3 domain) and SYNJ1. Interacts with AMPH. Interacts (via C-terminal proline-rich domain (PRD)) with SYT1; this interaction facilitates vesicle fission during clathrin-mediated endocytosis (CME). Interacts (via C-terminal proline-rich domain (PRD)) with PLCG1 (via SH3 domain); this interaction stimulates the release of GDP from DNM1 and enhances DNM1-dependent endocytosis. Interacts with SNPH; this interaction inhibits the binding of DNM1 to AMPH and DNM1-receptor-mediated endocytosis. Interacts with CAV1. Interacts with SH3GLB1 (via SH3 domain). Interacts with PACSIN1 (via SH3 domain), PACSIN2 (via SH3 domain) and PACSIN3 (via SH3 domain). Interacts with UNC119; this interaction decreases DNM1's GTPase activity and affects DNM1's interaction with AMPH. Interacts (GTP-bound form) with DNAJC6; this interaction allows clathrin-coated vesicle (CCV) formation at the plasma membrane. Phosphorylation at Ser-774 by GSK3B/GSK3-beta leads to inactivation of receptor-mediated endocytosis in non-neuronal cells. Dephosphorylation at Ser-774, through the EGFR downstream signaling, leads to activation and regulates early stages of clathrin-mediated endocytosis (CME). Phosphorylated by CDK5 leading to synaptic vesicle endocytosis (SVE) activation. As to expression, brain-specific (peripheral sensory neurons).

The protein localises to the cytoplasmic vesicle. The protein resides in the clathrin-coated vesicle. It is found in the golgi apparatus. It localises to the cell membrane. Its subcellular location is the membrane. The protein localises to the clathrin-coated pit. The protein resides in the presynapse. It is found in the secretory vesicle. It localises to the chromaffin granule. The catalysed reaction is GTP + H2O = GDP + phosphate + H(+). In terms of biological role, catalyzes the hydrolysis of GTP and utilizes this energy to mediate vesicle scission and participates in many forms of endocytosis, such as clathrin-mediated endocytosis or synaptic vesicle endocytosis as well as rapid endocytosis (RE). Associates to the membrane, through lipid binding, and self-assembles into rings and stacks of interconnected rings through oligomerization to form a helical polymer around the vesicle membrane leading to constriction of invaginated coated pits around their necks. Self-assembly of the helical polymer induces membrane tubules narrowing until the polymer reaches a length sufficient to trigger GTP hydrolysis. Depending on the curvature imposed on the tubules, membrane detachment from the helical polymer upon GTP hydrolysis can cause spontaneous hemifission followed by complete fission. May play a role in regulating early stages of clathrin-mediated endocytosis in non-neuronal cells through its activation by dephosphorylation via the signaling downstream of EGFR. Controls vesicle size at a step before fission, during formation of membrane pits, at hippocampal synapses. Controls plastic adaptation of the synaptic vesicle recycling machinery to high levels of activity. Mediates rapid endocytosis (RE), a Ca(2+)-dependent and clathrin- and K(+)-independent process in chromaffin cells. Microtubule-associated force-producing protein involved in producing microtubule bundles and able to bind and hydrolyze GTP. Through its interaction with DNAJC6, acts during the early steps of clathrin-coated vesicle (CCV) formation. This is Dynamin-1 (Dnm1) from Rattus norvegicus (Rat).